A 598-amino-acid polypeptide reads, in one-letter code: Elongation factor 4 (598 aa).

The 178-residue stretch at 4 to 181 folds into the tr-type G domain; that stretch reads KKIRNFAIIA…AIVNLIPPPQ (178 aa). GTP-binding positions include 16–21 and 128–131; these read DHGKST and NKID.

Belongs to the TRAFAC class translation factor GTPase superfamily. Classic translation factor GTPase family. LepA subfamily.

It localises to the cell membrane. The catalysed reaction is GTP + H2O = GDP + phosphate + H(+). In terms of biological role, required for accurate and efficient protein synthesis under certain stress conditions. May act as a fidelity factor of the translation reaction, by catalyzing a one-codon backward translocation of tRNAs on improperly translocated ribosomes. Back-translocation proceeds from a post-translocation (POST) complex to a pre-translocation (PRE) complex, thus giving elongation factor G a second chance to translocate the tRNAs correctly. Binds to ribosomes in a GTP-dependent manner. The chain is Elongation factor 4 from Mesomycoplasma hyopneumoniae (strain 7448) (Mycoplasma hyopneumoniae).